Reading from the N-terminus, the 145-residue chain is D-aminoacyl-tRNA deacylase (145 aa).

The Gly-cisPro motif, important for rejection of L-amino acids signature appears at 137–138 (GP).

It belongs to the DTD family. As to quaternary structure, homodimer.

Its subcellular location is the cytoplasm. It carries out the reaction glycyl-tRNA(Ala) + H2O = tRNA(Ala) + glycine + H(+). The enzyme catalyses a D-aminoacyl-tRNA + H2O = a tRNA + a D-alpha-amino acid + H(+). Its function is as follows. An aminoacyl-tRNA editing enzyme that deacylates mischarged D-aminoacyl-tRNAs. Also deacylates mischarged glycyl-tRNA(Ala), protecting cells against glycine mischarging by AlaRS. Acts via tRNA-based rather than protein-based catalysis; rejects L-amino acids rather than detecting D-amino acids in the active site. By recycling D-aminoacyl-tRNA to D-amino acids and free tRNA molecules, this enzyme counteracts the toxicity associated with the formation of D-aminoacyl-tRNA entities in vivo and helps enforce protein L-homochirality. The chain is D-aminoacyl-tRNA deacylase from Pseudomonas putida (strain ATCC 700007 / DSM 6899 / JCM 31910 / BCRC 17059 / LMG 24140 / F1).